A 103-amino-acid chain; its full sequence is MQPNDITFFQRFQNDILAGRKTITIRDASESHFKAGDMLRVGRFEDDGYFCTIEVTGTSTVTLDTLNEKHAQQENMSLDELKRVIAEIYPNQTQFYVIDFKCL.

An ASCH domain is found at 6-94 (ITFFQRFQND…IAEIYPNQTQ (89 aa)). Lys-21 serves as the catalytic Proton acceptor. Thr-24 serves as the catalytic Nucleophile. The active-site Proton donor is Glu-74.

It belongs to the N(4)-acetylcytidine amidohydrolase family.

The catalysed reaction is N(4)-acetylcytidine + H2O = cytidine + acetate + H(+). It catalyses the reaction N(4)-acetyl-2'-deoxycytidine + H2O = 2'-deoxycytidine + acetate + H(+). The enzyme catalyses N(4)-acetylcytosine + H2O = cytosine + acetate + H(+). In terms of biological role, catalyzes the hydrolysis of N(4)-acetylcytidine (ac4C). The polypeptide is N(4)-acetylcytidine amidohydrolase (yqfB) (Salmonella schwarzengrund (strain CVM19633)).